Reading from the N-terminus, the 273-residue chain is Hydroxyethylthiazole kinase (273 aa).

Methionine 49 provides a ligand contact to substrate. Residues lysine 125 and threonine 171 each coordinate ATP. Residue glycine 198 coordinates substrate.

The protein belongs to the Thz kinase family. It depends on Mg(2+) as a cofactor.

It carries out the reaction 5-(2-hydroxyethyl)-4-methylthiazole + ATP = 4-methyl-5-(2-phosphooxyethyl)-thiazole + ADP + H(+). It participates in cofactor biosynthesis; thiamine diphosphate biosynthesis; 4-methyl-5-(2-phosphoethyl)-thiazole from 5-(2-hydroxyethyl)-4-methylthiazole: step 1/1. Catalyzes the phosphorylation of the hydroxyl group of 4-methyl-5-beta-hydroxyethylthiazole (THZ). This chain is Hydroxyethylthiazole kinase, found in Natranaerobius thermophilus (strain ATCC BAA-1301 / DSM 18059 / JW/NM-WN-LF).